The sequence spans 432 residues: tRNA modification GTPase MnmE (432 aa).

Residues R23, E85, and K124 each contribute to the (6S)-5-formyl-5,6,7,8-tetrahydrofolate site. One can recognise a TrmE-type G domain in the interval 217–362 (GARLALIGAP…LKEAVREALL (146 aa)). N227 serves as a coordination point for K(+). Residues 227–232 (NAGKSS), 246–252 (SPIPGTT), and 271–274 (DTAG) each bind GTP. S231 provides a ligand contact to Mg(2+). K(+) is bound by residues S246, I248, and T251. Residue T252 participates in Mg(2+) binding. Residue K432 coordinates (6S)-5-formyl-5,6,7,8-tetrahydrofolate.

The protein belongs to the TRAFAC class TrmE-Era-EngA-EngB-Septin-like GTPase superfamily. TrmE GTPase family. Homodimer. Heterotetramer of two MnmE and two MnmG subunits. K(+) serves as cofactor.

It localises to the cytoplasm. Exhibits a very high intrinsic GTPase hydrolysis rate. Involved in the addition of a carboxymethylaminomethyl (cmnm) group at the wobble position (U34) of certain tRNAs, forming tRNA-cmnm(5)s(2)U34. In Thermus thermophilus (strain ATCC 27634 / DSM 579 / HB8), this protein is tRNA modification GTPase MnmE.